A 305-amino-acid chain; its full sequence is MGGTLAWTLLLPLLLRESDSLEPSCTVSSADVDWNAEFSATCLNFSGLSLSLPHNQSLRASNVILLDLSGNGLRELPVTFFAHLQKLEVLNVLRNPLSRVDGALAARCDLDLQADCNCALESWHDIRRDNCSGQKPLLCWDTTSSQHNLSAFLEVSCAPGLASATIGAVVVSGCLLLGLAIAGPVLAWRLWRCRVARSRELNKPWAAQDGPKPGLGLQPRYGSRSAPKPQVAVPSCPSTPDYENMFVGQPAAEHQWDEQGAHPSEDNDFYINYKDIDLASQPVYCNLQSLGQAPMDEEEYVIPGH.

The first 20 residues, 1–20 (MGGTLAWTLLLPLLLRESDS), serve as a signal peptide directing secretion. The Extracellular portion of the chain corresponds to 21–165 (LEPSCTVSSA…SCAPGLASAT (145 aa)). LRR repeat units lie at residues 39–59 (SATC…QSLR), 62–83 (NVIL…FFAH), and 86–107 (KLEV…LAAR). N-linked (GlcNAc...) asparagine glycans are attached at residues Asn44 and Asn55. N-linked (GlcNAc...) asparagine glycans are attached at residues Asn130 and Asn148. A helical transmembrane segment spans residues 166-186 (IGAVVVSGCLLLGLAIAGPVL). The Cytoplasmic segment spans residues 187 to 305 (AWRLWRCRVA…DEEEYVIPGH (119 aa)). The disordered stretch occupies residues 204-229 (PWAAQDGPKPGLGLQPRYGSRSAPKP). Tyr284 carries the post-translational modification Phosphotyrosine.

In terms of assembly, interacts with RIGI. Interacts with SQSTM1. Interacts with p65/RELA; this interaction promotes the degradation of RELA through autophagy. As to expression, expressed in plasmacytoid dendritic cells (PDC), monocyte-derived dendritic cells (MDDC), granulocytes, monocytes, B-lymphocytes, peripheral blood leukocytes, spleen, bone marrow, and, to a lesser extent, lymph nodes, fetal liver, and appendix but not in thymus.

The protein localises to the membrane. Its subcellular location is the cytoplasm. Functionally, plays a role in the inhibition of RLR-mediated type I interferon signaling pathway by targeting RIGI for autophagic degradation. Interacts specifically with ISG15-associated RIGI to promote interaction between RIGI and the autophagic cargo receptor p62/SQSTM1 to mediate RIGI degradation via selective autophagy. Also plays a role in the inhibition of NF-kappa-B signaling pathway and inflammatory response by promoting the degradation of p65/RELA. This is Leucine-rich repeat-containing protein 25 (LRRC25) from Homo sapiens (Human).